The following is a 147-amino-acid chain: VHWEDAEKQYIVSVFSKIDVDHVGANTLERVLIVFPWTKRYFNSFGDLSSPGAIKHNNKVSAHGRKVLAAIIECTRHFGNIKGHLANLSHLHSEKLHVDPHNFRVLGQCLRIELAAALGFKEFTPERNAYFQKFMDVISHSLGREYH.

The Globin domain maps to 2–147; that stretch reads HWEDAEKQYI…ISHSLGREYH (146 aa). 2 residues coordinate heme b: His-63 and His-92.

It belongs to the globin family. Heterotetramer of two alpha chains and two beta chains. As to expression, red blood cells.

In terms of biological role, involved in oxygen transport from the lung to the various peripheral tissues. This is Hemoglobin subunit beta (HBB) from Lepidosiren paradoxus (South American lungfish).